The primary structure comprises 92 residues: Small ribosomal subunit protein uS17 (92 aa).

This sequence belongs to the universal ribosomal protein uS17 family. Part of the 30S ribosomal subunit.

One of the primary rRNA binding proteins, it binds specifically to the 5'-end of 16S ribosomal RNA. This chain is Small ribosomal subunit protein uS17, found in Corynebacterium glutamicum (strain ATCC 13032 / DSM 20300 / JCM 1318 / BCRC 11384 / CCUG 27702 / LMG 3730 / NBRC 12168 / NCIMB 10025 / NRRL B-2784 / 534).